A 417-amino-acid chain; its full sequence is Serine hydroxymethyltransferase (417 aa).

Residues Leu121 and 125–127 (GHL) each bind (6S)-5,6,7,8-tetrahydrofolate. N6-(pyridoxal phosphate)lysine is present on Lys229. Residue 355 to 357 (SPF) coordinates (6S)-5,6,7,8-tetrahydrofolate.

It belongs to the SHMT family. Homodimer. It depends on pyridoxal 5'-phosphate as a cofactor.

Its subcellular location is the cytoplasm. It carries out the reaction (6R)-5,10-methylene-5,6,7,8-tetrahydrofolate + glycine + H2O = (6S)-5,6,7,8-tetrahydrofolate + L-serine. It functions in the pathway one-carbon metabolism; tetrahydrofolate interconversion. The protein operates within amino-acid biosynthesis; glycine biosynthesis; glycine from L-serine: step 1/1. Its function is as follows. Catalyzes the reversible interconversion of serine and glycine with tetrahydrofolate (THF) serving as the one-carbon carrier. This reaction serves as the major source of one-carbon groups required for the biosynthesis of purines, thymidylate, methionine, and other important biomolecules. Also exhibits THF-independent aldolase activity toward beta-hydroxyamino acids, producing glycine and aldehydes, via a retro-aldol mechanism. The polypeptide is Serine hydroxymethyltransferase (Shewanella sp. (strain MR-4)).